The sequence spans 186 residues: Interferon beta-3 (186 aa).

The first 21 residues, 1–21, serve as a signal peptide directing secretion; that stretch reads MTYRCLLPMVLLLCFSTTALS. A disulfide bond links cysteine 52 and cysteine 161. Residues asparagine 131 and asparagine 173 are each glycosylated (N-linked (GlcNAc...) asparagine).

Belongs to the alpha/beta interferon family. In terms of assembly, monomer.

The protein resides in the secreted. Functionally, has antiviral, antibacterial and anticancer activities. This is Interferon beta-3 (IFNB3) from Bos taurus (Bovine).